Consider the following 198-residue polypeptide: Recombination protein RecR (198 aa).

The C4-type zinc finger occupies 58 to 73 (CLNCGNVGTSDICDIC). The 95-residue stretch at 81–175 (GELCVVEDVA…RLTSLAQGVP (95 aa)) folds into the Toprim domain.

The protein belongs to the RecR family.

May play a role in DNA repair. It seems to be involved in an RecBC-independent recombinational process of DNA repair. It may act with RecF and RecO. The chain is Recombination protein RecR from Ruegeria pomeroyi (strain ATCC 700808 / DSM 15171 / DSS-3) (Silicibacter pomeroyi).